Here is a 331-residue protein sequence, read N- to C-terminus: Ribosomal RNA small subunit methyltransferase H (331 aa).

S-adenosyl-L-methionine-binding positions include 38-40 (GGY), aspartate 56, phenylalanine 83, aspartate 100, and glutamine 107. The interval 289–331 (AELAENPRARSARLRVGVRTDAPAGKVDPQALGTPLIPKKGRR) is disordered.

This sequence belongs to the methyltransferase superfamily. RsmH family.

It is found in the cytoplasm. The enzyme catalyses cytidine(1402) in 16S rRNA + S-adenosyl-L-methionine = N(4)-methylcytidine(1402) in 16S rRNA + S-adenosyl-L-homocysteine + H(+). Its function is as follows. Specifically methylates the N4 position of cytidine in position 1402 (C1402) of 16S rRNA. The sequence is that of Ribosomal RNA small subunit methyltransferase H from Cereibacter sphaeroides (strain ATCC 17029 / ATH 2.4.9) (Rhodobacter sphaeroides).